Consider the following 118-residue polypeptide: Large ribosomal subunit protein bL17 (118 aa).

This sequence belongs to the bacterial ribosomal protein bL17 family. As to quaternary structure, part of the 50S ribosomal subunit. Contacts protein L32.

This chain is Large ribosomal subunit protein bL17, found in Campylobacter concisus (strain 13826).